We begin with the raw amino-acid sequence, 445 residues long: Glutamyl-tRNA(Gln) amidotransferase subunit D (445 aa).

Residues 93–425 (SEIKIISTGG…EKIRSLMISN (333 aa)) form the Asparaginase/glutaminase domain. Catalysis depends on residues threonine 103, threonine 179, aspartate 180, and lysine 258.

Belongs to the asparaginase 1 family. GatD subfamily. As to quaternary structure, heterodimer of GatD and GatE.

It carries out the reaction L-glutamyl-tRNA(Gln) + L-glutamine + ATP + H2O = L-glutaminyl-tRNA(Gln) + L-glutamate + ADP + phosphate + H(+). In terms of biological role, allows the formation of correctly charged Gln-tRNA(Gln) through the transamidation of misacylated Glu-tRNA(Gln) in organisms which lack glutaminyl-tRNA synthetase. The reaction takes place in the presence of glutamine and ATP through an activated gamma-phospho-Glu-tRNA(Gln). The GatDE system is specific for glutamate and does not act on aspartate. This is Glutamyl-tRNA(Gln) amidotransferase subunit D from Saccharolobus islandicus (strain M.16.27) (Sulfolobus islandicus).